Consider the following 306-residue polypeptide: tRNA pseudouridine synthase B (306 aa).

The active-site Nucleophile is aspartate 47.

Belongs to the pseudouridine synthase TruB family. Type 1 subfamily.

The catalysed reaction is uridine(55) in tRNA = pseudouridine(55) in tRNA. In terms of biological role, responsible for synthesis of pseudouridine from uracil-55 in the psi GC loop of transfer RNAs. The protein is tRNA pseudouridine synthase B of Neisseria gonorrhoeae (strain ATCC 700825 / FA 1090).